The following is a 297-amino-acid chain: Lipoyl synthase (297 aa).

7 residues coordinate [4Fe-4S] cluster: Cys-40, Cys-45, Cys-51, Cys-67, Cys-71, Cys-74, and Ser-280. The region spanning 53–269 is the Radical SAM core domain; it reads AVRKTATFMI…KEIALSKGFS (217 aa).

Belongs to the radical SAM superfamily. Lipoyl synthase family. The cofactor is [4Fe-4S] cluster.

It is found in the cytoplasm. The enzyme catalyses [[Fe-S] cluster scaffold protein carrying a second [4Fe-4S](2+) cluster] + N(6)-octanoyl-L-lysyl-[protein] + 2 oxidized [2Fe-2S]-[ferredoxin] + 2 S-adenosyl-L-methionine + 4 H(+) = [[Fe-S] cluster scaffold protein] + N(6)-[(R)-dihydrolipoyl]-L-lysyl-[protein] + 4 Fe(3+) + 2 hydrogen sulfide + 2 5'-deoxyadenosine + 2 L-methionine + 2 reduced [2Fe-2S]-[ferredoxin]. It participates in protein modification; protein lipoylation via endogenous pathway; protein N(6)-(lipoyl)lysine from octanoyl-[acyl-carrier-protein]. In terms of biological role, catalyzes the radical-mediated insertion of two sulfur atoms into the C-6 and C-8 positions of the octanoyl moiety bound to the lipoyl domains of lipoate-dependent enzymes, thereby converting the octanoylated domains into lipoylated derivatives. This is Lipoyl synthase from Bacillus cereus (strain ATCC 14579 / DSM 31 / CCUG 7414 / JCM 2152 / NBRC 15305 / NCIMB 9373 / NCTC 2599 / NRRL B-3711).